An 885-amino-acid polypeptide reads, in one-letter code: Envelope glycoprotein B (885 aa).

The signal sequence occupies residues 1-34 (MRPRGTPPSFLPLPVLLALAVIAAAGRAAPAAAA). Low complexity predominate over residues 29 to 46 (APAAAAAPTADPAATPAL). Positions 29–74 (APAAAAAPTADPAATPALPEDEEVPDEDGEGVATPAPAANASVEAG) are disordered. Topologically, residues 35–759 (APTADPAATP…SGVSSFLSNP (725 aa)) are virion surface. The span at 47 to 58 (PEDEEVPDEDGE) shows a compositional bias: acidic residues. 2 N-linked (GlcNAc...) asparagine; by host glycosylation sites follow: Asn-68 and Asn-122. Cystine bridges form between Cys-97–Cys-558, Cys-114–Cys-514, Cys-188–Cys-252, Cys-345–Cys-393, and Cys-581–Cys-618. 2 involved in fusion and/or binding to host membrane regions span residues 154 to 160 (VWFGHRY) and 239 to 246 (RVEAFHRY). Residues Asn-379 and Asn-411 are each glycosylated (N-linked (GlcNAc...) asparagine; by host). The disordered stretch occupies residues 455-478 (RRPAGGDPGEAATPGPSVDPPSVE). A glycan (N-linked (GlcNAc...) asparagine; by host) is linked at Asn-659. 2 hydrophobic membrane proximal region regions span residues 704-757 (IDTV…SFLS) and 716-756 (LFAG…SSFL). The chain crosses the membrane as a helical span at residues 760–780 (FGALAVGLLVLAGLAAAFFAF). The Intravirion segment spans residues 781 to 885 (RYVMRLQRNP…PLRDTDEEEL (105 aa)). The short motif at 834-837 (YMAL) is the Golgi targeting element. Residues 866–885 (MRKRARPRYSPLRDTDEEEL) form a disordered region. The short motif at 874 to 877 (YSPL) is the Internalization motif element.

It belongs to the herpesviridae glycoprotein B family. In terms of assembly, homotrimer; disulfide-linked. Binds to heparan sulfate proteoglycans. Interacts with gH/gL heterodimer.

It is found in the virion membrane. It localises to the host cell membrane. The protein localises to the host endosome membrane. Its subcellular location is the host Golgi apparatus membrane. Functionally, envelope glycoprotein that forms spikes at the surface of virion envelope. Essential for the initial attachment to heparan sulfate moieties of the host cell surface proteoglycans. Involved in fusion of viral and cellular membranes leading to virus entry into the host cell. Following initial binding to its host receptors, membrane fusion is mediated by the fusion machinery composed at least of gB and the heterodimer gH/gL. May be involved in the fusion between the virion envelope and the outer nuclear membrane during virion egress. The chain is Envelope glycoprotein B from Herpes simplex virus type 2 (strain SA8) (Simian agent 8).